The primary structure comprises 240 residues: Putative peptidoglycan hydrolase Rv2525c (240 aa).

The segment at residues 1–33 (MSVSRRDVLKFAAATPGVLGLGVVASSLRAAPA) is a signal peptide (tat-type signal).

Predicted to be exported by the Tat system. The position of the signal peptide cleavage has not been experimentally proven.

The protein localises to the secreted. It carries out the reaction Hydrolysis of (1-&gt;4)-beta-linkages between N-acetylmuramic acid and N-acetyl-D-glucosamine residues in a peptidoglycan and between N-acetyl-D-glucosamine residues in chitodextrins.. Its pathway is cell wall degradation; peptidoglycan degradation. Its function is as follows. May function as a peptidoglycan hydrolase with glycosidase activity. In vitro, displays esterase activity toward p-nitrophenyl esters of various acyl chain length (C4 to C16), with a preference for p-nitrophenyl butyrate (C4). This is Putative peptidoglycan hydrolase Rv2525c from Mycobacterium tuberculosis (strain ATCC 25618 / H37Rv).